A 1076-amino-acid chain; its full sequence is Nickel-cobalt-cadmium resistance protein NccA (1076 aa).

A run of 12 helical transmembrane segments spans residues 14–34 (WLVLFLTAVVGAIGAWQLNLL), 367–387 (VAKNLVEGAALVVVILFALLG), 391–411 (AAVIAALVIPLSLLISAIGMN), 419–439 (LMSLGALDFGLIIDGAVIIVE), 476–496 (TVYGQLVIFMVFLPCLTFQGV), 503–523 (PMVITLMLALASAFVLSLTFV), 562–582 (MPFLGAALVTLALAAMAFTFV), 904–924 (LAIIVPLCFILIAATLYMAIG), 929–949 (TATVLTAVPLALAGGVFALVL), 960–980 (VGFIAVSGVAVLNGLVLISAI), 1004–1024 (PVLMTALVASLGFVPMAIATG), and 1036–1056 (VVIGGLITATVLTLFVLPAVC).

The protein belongs to the resistance-nodulation-cell division (RND) (TC 2.A.6) family.

Its subcellular location is the cell membrane. Component of the NCC cation-efflux system that confers resistance to nickel, cobalt and cadmium. May form a membrane tunnel, which allows ion transport across the membrane. The sequence is that of Nickel-cobalt-cadmium resistance protein NccA (nccA) from Alcaligenes xylosoxydans xylosoxydans (Achromobacter xylosoxidans).